A 249-amino-acid chain; its full sequence is ATP synthase subunit a (249 aa).

5 helical membrane passes run 35–55 (ILLT…ISSL), 92–112 (VPFI…GALV), 131–151 (INTT…AGIS), 187–209 (LFGN…PLFI), and 221–241 (SAIQ…EALE).

The protein belongs to the ATPase A chain family. F-type ATPases have 2 components, CF(1) - the catalytic core - and CF(0) - the membrane proton channel. CF(1) has five subunits: alpha(3), beta(3), gamma(1), delta(1), epsilon(1). CF(0) has four main subunits: a, b, b' and c.

It is found in the cellular thylakoid membrane. In terms of biological role, key component of the proton channel; it plays a direct role in the translocation of protons across the membrane. The protein is ATP synthase subunit a of Trichodesmium erythraeum (strain IMS101).